A 502-amino-acid polypeptide reads, in one-letter code: Protein YdgA (502 aa).

The signal sequence occupies residues 1-19; the sequence is MNKSLVAVGVIVALGVVWT.

It to E.coli YihF and H.influenzae HI_1236. Homodimer.

The protein resides in the cell inner membrane. The chain is Protein YdgA (ydgA) from Escherichia coli (strain K12).